A 1142-amino-acid chain; its full sequence is Protein kinase C-like (1142 aa).

The REM-1 1 domain maps to 1-67 (MNDEDKVHDI…LRELQMRRLG (67 aa)). The disordered stretch occupies residues 70-139 (VDNMSLGASP…PPDSNVPRAR (70 aa)). One can recognise an REM-1 2 domain in the interval 149–226 (KFDTPHLGPR…LKRYEELHID (78 aa)). The C2 domain maps to 231–349 (GPDDDSINLP…LRRKKIEAEM (119 aa)). The interval 357 to 403 (ADRVGSRAPPPQFPMGAQSPQFAAPPTSPGSQEQNTMIPPQAPPPSQ) is disordered. The span at 385–394 (PGSQEQNTMI) shows a compositional bias: polar residues. 2 consecutive Phorbol-ester/DAG-type zinc fingers follow at residues 457–505 (GHKF…VTKC) and 525–576 (PHRF…PDFC). Disordered stretches follow at residues 592 to 622 (TQKK…SGSI) and 651 to 807 (SQTT…TDPG). The span at 613-622 (SKTSISSGSI) shows a compositional bias: polar residues. 3 stretches are compositionally biased toward low complexity: residues 663–677 (TSTS…AAAA), 712–724 (SAQQ…SPQQ), and 741–765 (PQAR…MYQQ). The Protein kinase domain maps to 817–1076 (FNFLAVLGKG…AQEIMSQPFF (260 aa)). ATP contacts are provided by residues 823-831 (LGKGNFGKV) and lysine 846. Catalysis depends on aspartate 942, which acts as the Proton acceptor. The AGC-kinase C-terminal domain maps to 1077-1142 (RNINWDDIYH…RGFSYTADFE (66 aa)).

The protein belongs to the protein kinase superfamily. AGC Ser/Thr protein kinase family. PKC subfamily.

It catalyses the reaction L-seryl-[protein] + ATP = O-phospho-L-seryl-[protein] + ADP + H(+). The enzyme catalyses L-threonyl-[protein] + ATP = O-phospho-L-threonyl-[protein] + ADP + H(+). The chain is Protein kinase C-like from Neurospora crassa (strain ATCC 24698 / 74-OR23-1A / CBS 708.71 / DSM 1257 / FGSC 987).